The following is a 311-amino-acid chain: MAVTVQMLVDRLKLNVIYGDEHLLSKRITTADISRPGLEMTGYFDYYAPERLQLVGMKEWSYLMAMTGHNRYQVLREMFQKETPAIVVARDLEIPEEMYEAAKDTGIAILQSKAPTSRLSGEVSWYLDSCLAERTSVHGVLMDIYGMGVLIQGDSGIGKSETGLELVKRGHRLVADDRVDVYAKDEETLWGEPAEILRHLLEIRGVGIIDIMSLYGASAVKDSSQVQLAIYLENFETGKVFDRLGNGNEEIELSGVKVPRIRIPVKTGRNVSVVIEAAAMNHRAKQMGFDATQTFEDRLTHLISQNEVNDD.

Active-site residues include His138 and Lys159. Residue 153–160 (GDSGIGKS) participates in ATP binding. Position 160 (Ser160) interacts with Mg(2+). Asp177 acts as the Proton acceptor; for phosphorylation activity. Proton donor; for dephosphorylation activity in catalysis. An important for the catalytic mechanism of both phosphorylation and dephosphorylation region spans residues 201-210 (LEIRGVGIID). Glu202 contributes to the Mg(2+) binding site. Arg243 is an active-site residue. The segment at 264-269 (PVKTGR) is important for the catalytic mechanism of dephosphorylation.

The protein belongs to the HPrK/P family. In terms of assembly, homohexamer. Mg(2+) serves as cofactor.

It catalyses the reaction [HPr protein]-L-serine + ATP = [HPr protein]-O-phospho-L-serine + ADP + H(+). The catalysed reaction is [HPr protein]-O-phospho-L-serine + phosphate + H(+) = [HPr protein]-L-serine + diphosphate. Its function is as follows. Catalyzes the ATP- as well as the pyrophosphate-dependent phosphorylation of a specific serine residue in HPr, a phosphocarrier protein of the phosphoenolpyruvate-dependent sugar phosphotransferase system (PTS). HprK/P also catalyzes the pyrophosphate-producing, inorganic phosphate-dependent dephosphorylation (phosphorolysis) of seryl-phosphorylated HPr (P-Ser-HPr). The two antagonistic activities of HprK/P are regulated by several intracellular metabolites, which change their concentration in response to the absence or presence of rapidly metabolisable carbon sources (glucose, fructose, etc.) in the growth medium. Therefore, by controlling the phosphorylation state of HPr, HPrK/P is a sensor enzyme that plays a major role in the regulation of carbon metabolism and sugar transport: it mediates carbon catabolite repression (CCR), and regulates PTS-catalyzed carbohydrate uptake and inducer exclusion. The sequence is that of HPr kinase/phosphorylase from Streptococcus agalactiae serotype Ia (strain ATCC 27591 / A909 / CDC SS700).